The following is a 170-amino-acid chain: Adenine phosphoribosyltransferase (170 aa).

The protein belongs to the purine/pyrimidine phosphoribosyltransferase family. As to quaternary structure, homodimer.

It localises to the cytoplasm. It carries out the reaction AMP + diphosphate = 5-phospho-alpha-D-ribose 1-diphosphate + adenine. It participates in purine metabolism; AMP biosynthesis via salvage pathway; AMP from adenine: step 1/1. Catalyzes a salvage reaction resulting in the formation of AMP, that is energically less costly than de novo synthesis. This is Adenine phosphoribosyltransferase from Prochlorococcus marinus (strain MIT 9312).